We begin with the raw amino-acid sequence, 120 residues long: FK506-binding protein 1B (120 aa).

Residues 1 to 24 (MNPPQGVTKTILRPGNGRDSPHTG) are disordered. The region spanning 24–120 (GDTVIIDYTG…LVLYVCSPAG (97 aa)) is the PPIase FKBP-type domain.

Belongs to the FKBP-type PPIase family. FKBP1 subfamily.

It catalyses the reaction [protein]-peptidylproline (omega=180) = [protein]-peptidylproline (omega=0). Functionally, PPIases accelerate the folding of proteins. It catalyzes the cis-trans isomerization of proline imidic peptide bonds in oligopeptides. This Emericella nidulans (strain FGSC A4 / ATCC 38163 / CBS 112.46 / NRRL 194 / M139) (Aspergillus nidulans) protein is FK506-binding protein 1B (FKBP3).